A 548-amino-acid chain; its full sequence is MEDDLFQLRHLPVVKFRRTGESSKSEDDNISGEHEIQIGPVQTELEAVELEDGTTVPKEFANPTDDTFMVEDAVEAIGFGKFQWKLSMLTGLAWMADAMEMMILSILAPQLHCEWRLPSWQVALLTSVVFIGMMASSSLWGNVSDQYGRRTGLKISVIWTLYYGILSAFAPVYSWILVLRGLVGFGIGGVPQSVTLYAEFLPMKSRAKCILLIEIFWALGTVFEVLLAIFVMPTLGWRWLLILSALPLMLFAILCFWLPESARYEVLSGNQEKALATLKRIATENGAPMPLGKLIVSRQEDRGKIRDLFSPQFRCTTLLLWFIWFSNAFSYYGLVLLTTELFQAGDVCSISNQRKAVKPKCSLACEYLTVEDYTDLLWTTLSEFPGLLVTLWIIDRVGRKKTMAICFIIFSFSALLLFLCVGRNVLTVFLFIARAFISGGFQAAYVYTPEVYPTATRALGLGTCSGMARVGALITPFIAQVMLESSIYLTVLVYSGCCVLAAVASCFLPIETKGRGLQESSHREWGQEMVGRGTHNVGATPSHSGSQE.

Topologically, residues 1–87 (MEDDLFQLRH…GFGKFQWKLS (87 aa)) are cytoplasmic. A helical membrane pass occupies residues 88 to 108 (MLTGLAWMADAMEMMILSILA). Residues 109-119 (PQLHCEWRLPS) are Vesicular-facing. A helical transmembrane segment spans residues 120 to 140 (WQVALLTSVVFIGMMASSSLW). Residues 141–156 (GNVSDQYGRRTGLKIS) are Cytoplasmic-facing. Residues 157–177 (VIWTLYYGILSAFAPVYSWIL) form a helical membrane-spanning segment. Residues 178–180 (VLR) are Vesicular-facing. The helical transmembrane segment at 181-201 (GLVGFGIGGVPQSVTLYAEFL) threads the bilayer. Residues 202-209 (PMKSRAKC) are Cytoplasmic-facing. The helical transmembrane segment at 210–230 (ILLIEIFWALGTVFEVLLAIF) threads the bilayer. Residues 231-238 (VMPTLGWR) are Vesicular-facing. Residues 239 to 259 (WLLILSALPLMLFAILCFWLP) form a helical membrane-spanning segment. At 260-316 (ESARYEVLSGNQEKALATLKRIATENGAPMPLGKLIVSRQEDRGKIRDLFSPQFRCT) the chain is on the cytoplasmic side. The helical transmembrane segment at 317-337 (TLLLWFIWFSNAFSYYGLVLL) threads the bilayer. The Vesicular portion of the chain corresponds to 338-373 (TTELFQAGDVCSISNQRKAVKPKCSLACEYLTVEDY). Residues 374–394 (TDLLWTTLSEFPGLLVTLWII) traverse the membrane as a helical segment. Over 395-401 (DRVGRKK) the chain is Cytoplasmic. Residues 402–422 (TMAICFIIFSFSALLLFLCVG) traverse the membrane as a helical segment. The Vesicular segment spans residues 423-424 (RN). The chain crosses the membrane as a helical span at residues 425–445 (VLTVFLFIARAFISGGFQAAY). The Cytoplasmic portion of the chain corresponds to 446–457 (VYTPEVYPTATR). Residues 458 to 478 (ALGLGTCSGMARVGALITPFI) traverse the membrane as a helical segment. Residues 479–486 (AQVMLESS) are Vesicular-facing. The chain crosses the membrane as a helical span at residues 487-507 (IYLTVLVYSGCCVLAAVASCF). The Cytoplasmic segment spans residues 508 to 548 (LPIETKGRGLQESSHREWGQEMVGRGTHNVGATPSHSGSQE). Residues 519–548 (ESSHREWGQEMVGRGTHNVGATPSHSGSQE) form a disordered region. A compositionally biased stretch (polar residues) spans 537–548 (VGATPSHSGSQE).

This sequence belongs to the major facilitator superfamily. As to expression, detected in embryonic trigeminal ganglion and spinal cord.

It localises to the cytoplasmic vesicle. It is found in the secretory vesicle. The protein resides in the synaptic vesicle membrane. The sequence is that of Synaptic vesicle 2-related protein (svop) from Xenopus laevis (African clawed frog).